A 241-amino-acid polypeptide reads, in one-letter code: Ashwin (241 aa).

3 disordered regions span residues 1 to 21 (MAAQGRGRVGGGKEERVSARS), 82 to 102 (KMMEKKRKQNEPKSENKSVTA), and 212 to 241 (KRSVPKDESDLPNDLKPTEAKKKIQHCTWP). The span at 11–21 (GGKEERVSARS) shows a compositional bias: basic and acidic residues.

Belongs to the ashwin family.

The protein resides in the nucleus. The sequence is that of Ashwin from Gallus gallus (Chicken).